A 287-amino-acid chain; its full sequence is Protease HtpX homolog (287 aa).

2 helical membrane passes run 5–25 (IRTG…GYWI) and 28–48 (GAGA…AYWV). A Zn(2+)-binding site is contributed by H131. The active site involves E132. Zn(2+) is bound at residue H135. 2 consecutive transmembrane segments (helical) span residues 146-166 (VTAT…FFGG) and 174-194 (PFAG…ATLV). A Zn(2+)-binding site is contributed by E203.

It belongs to the peptidase M48B family. Zn(2+) serves as cofactor.

The protein localises to the cell inner membrane. This chain is Protease HtpX homolog, found in Acidiphilium cryptum (strain JF-5).